Here is a 381-residue protein sequence, read N- to C-terminus: 1-deoxy-D-xylulose 5-phosphate reductoisomerase (381 aa).

NADPH-binding residues include T11, G12, S13, I14, N37, and N121. K122 is a 1-deoxy-D-xylulose 5-phosphate binding site. Residue E123 participates in NADPH binding. D147 is a Mn(2+) binding site. Residues S148, E149, S173, and H196 each coordinate 1-deoxy-D-xylulose 5-phosphate. E149 contacts Mn(2+). An NADPH-binding site is contributed by G202. 1-deoxy-D-xylulose 5-phosphate-binding residues include S209, N214, K215, and E218. E218 is a Mn(2+) binding site.

This sequence belongs to the DXR family. The cofactor is Mg(2+). Requires Mn(2+) as cofactor.

It catalyses the reaction 2-C-methyl-D-erythritol 4-phosphate + NADP(+) = 1-deoxy-D-xylulose 5-phosphate + NADPH + H(+). Its pathway is isoprenoid biosynthesis; isopentenyl diphosphate biosynthesis via DXP pathway; isopentenyl diphosphate from 1-deoxy-D-xylulose 5-phosphate: step 1/6. Its function is as follows. Catalyzes the NADPH-dependent rearrangement and reduction of 1-deoxy-D-xylulose-5-phosphate (DXP) to 2-C-methyl-D-erythritol 4-phosphate (MEP). The polypeptide is 1-deoxy-D-xylulose 5-phosphate reductoisomerase (Ruminiclostridium cellulolyticum (strain ATCC 35319 / DSM 5812 / JCM 6584 / H10) (Clostridium cellulolyticum)).